We begin with the raw amino-acid sequence, 348 residues long: Serine/threonine-protein kinase SBK2 (348 aa).

Residues 1-25 (MPGKQSEEGPAEAGASEDSEEEGLG) are disordered. Residues 62-330 (YEEVRPLGQG…IREHLGRPWR (269 aa)) form the Protein kinase domain. ATP contacts are provided by residues 68–76 (LGQGCYGRV) and Lys-91. The Proton acceptor role is filled by Asp-183.

This sequence belongs to the protein kinase superfamily. Ser/Thr protein kinase family. STKL subfamily.

It carries out the reaction L-seryl-[protein] + ATP = O-phospho-L-seryl-[protein] + ADP + H(+). The catalysed reaction is L-threonyl-[protein] + ATP = O-phospho-L-threonyl-[protein] + ADP + H(+). This is Serine/threonine-protein kinase SBK2 (SBK2) from Homo sapiens (Human).